A 185-amino-acid polypeptide reads, in one-letter code: Iodate reductase subunit IdrB (185 aa).

A signal peptide (tat-type signal) is located at residues 1–46; it reads MTTHPIHLHHDDPAHGGERACMSRRSFLLAGGAMVTLASLPGTAVA. The region spanning 69 to 168 is the Rieske domain; that stretch reads GEPLEFAYPY…LEVRGDDIYA (100 aa). Residues Cys-109, His-111, Cys-130, and His-133 each contribute to the [2Fe-2S] cluster site.

The protein belongs to the AOX family. In terms of assembly, the iodate reductase (Idr) complex is composed of a molybdopterin-dependent iodate reductase (IdrA and IdrB subunits) and two associated peroxidases (IdrP1 and IdrP2). It depends on [2Fe-2S] cluster as a cofactor. Post-translationally, predicted to be exported by the Tat system. The position of the signal peptide cleavage has not been experimentally proven.

It localises to the periplasm. Its function is as follows. Involved in iodate respiration. May accept electrons from cytochrome c551, and catalyze the reduction of iodate (IO(3)(-)) to produce the chemically unstable intermediate hypoiodous acid (HIO). This intermediate then undergoes abiotic disproportionation to yield two molecules of iodide (I(-)) and one molecule of iodate. The resultant iodate subsequently cycles back into the reductive pathway. The initial reduction of iodate may inadvertently produce low levels of incidental toxic H(2)O(2), which is detoxified by IdrP1 and IdrP2. This chain is Iodate reductase subunit IdrB, found in Denitromonas iodatirespirans.